Here is a 339-residue protein sequence, read N- to C-terminus: UDP-glucose 4-epimerase (339 aa).

NAD(+)-binding positions include 12–13 (FI), 32–37 (DNLCNS), 59–60 (DI), 81–85 (FAGLK), asparagine 100, serine 125, tyrosine 150, lysine 154, and phenylalanine 179. Substrate-binding residues include serine 125 and tyrosine 150. The active-site Proton acceptor is the tyrosine 150. Residues asparagine 180, 200–201 (NL), 217–219 (AVF), arginine 232, and 293–296 (RAGD) contribute to the substrate site.

This sequence belongs to the NAD(P)-dependent epimerase/dehydratase family. In terms of assembly, homodimer. Requires NAD(+) as cofactor.

It carries out the reaction UDP-alpha-D-glucose = UDP-alpha-D-galactose. It participates in carbohydrate metabolism; galactose metabolism. In terms of biological role, involved in the metabolism of galactose. Plays an essential role in the incorporation of galactose into meningococcal lipopolysaccharide surface molecules, which are important for pathogenesis. Catalyzes the conversion of UDP-galactose (UDP-Gal) to UDP-glucose (UDP-Glc) through a mechanism involving the transient reduction of NAD. The polypeptide is UDP-glucose 4-epimerase (galE) (Neisseria meningitidis serogroup B (strain ATCC BAA-335 / MC58)).